The sequence spans 123 residues: Putative iron-sulfur cluster insertion protein ErpA (123 aa).

3 residues coordinate iron-sulfur cluster: Cys-51, Cys-115, and Cys-117.

Belongs to the HesB/IscA family. In terms of assembly, homodimer. Iron-sulfur cluster serves as cofactor.

In terms of biological role, required for insertion of 4Fe-4S clusters. This is Putative iron-sulfur cluster insertion protein ErpA from Burkholderia ambifaria (strain ATCC BAA-244 / DSM 16087 / CCUG 44356 / LMG 19182 / AMMD) (Burkholderia cepacia (strain AMMD)).